The following is a 347-amino-acid chain: Protein RecA (347 aa).

67-74 (GPESSGKT) is a binding site for ATP.

The protein belongs to the RecA family.

The protein resides in the cytoplasm. Can catalyze the hydrolysis of ATP in the presence of single-stranded DNA, the ATP-dependent uptake of single-stranded DNA by duplex DNA, and the ATP-dependent hybridization of homologous single-stranded DNAs. It interacts with LexA causing its activation and leading to its autocatalytic cleavage. The protein is Protein RecA of Helicobacter acinonychis (strain Sheeba).